Here is a 306-residue protein sequence, read N- to C-terminus: Isoaspartyl peptidase/L-asparaginase (306 aa).

Thr174 serves as the catalytic Nucleophile. Substrate-binding positions include 202–205 (RIGD) and 224–227 (TGKG).

It belongs to the Ntn-hydrolase family. In terms of assembly, heterotetramer of two alpha and two beta chains arranged as a dimer of alpha/beta heterodimers. Cleaved into an alpha and beta chain by autocatalysis; this activates the enzyme. The N-terminal residue of the beta subunit is responsible for the nucleophile hydrolase activity. Developing seeds.

It catalyses the reaction Cleavage of a beta-linked Asp residue from the N-terminus of a polypeptide.. Functionally, degrades proteins damaged by L-isoaspartyl residue formation (also known as beta-Asp residues). Also has L-asparaginase activity, which is used to liberate stored nitrogen during seed development. The polypeptide is Isoaspartyl peptidase/L-asparaginase (Lupinus arboreus (Tree lupine)).